A 260-amino-acid polypeptide reads, in one-letter code: Taurine import ATP-binding protein TauB (260 aa).

The ABC transporter domain maps to 6–235; that stretch reads AQQVSVVYAS…RYAHGEPVRS (230 aa). 40–47 is a binding site for ATP; it reads GASGCGKS.

The protein belongs to the ABC transporter superfamily. Taurine importer (TC 3.A.1.17.1) family. In terms of assembly, the complex is composed of two ATP-binding proteins (TauB), two transmembrane proteins (TauC) and a solute-binding protein (TauA).

It localises to the cell inner membrane. The catalysed reaction is taurine(out) + ATP + H2O = taurine(in) + ADP + phosphate + H(+). In terms of biological role, part of the ABC transporter complex TauABC involved in taurine import. Responsible for energy coupling to the transport system. This is Taurine import ATP-binding protein TauB from Burkholderia pseudomallei (strain K96243).